Here is a 229-residue protein sequence, read N- to C-terminus: uncharacterized protein (229 aa).

A run of 7 helical transmembrane segments spans residues 6 to 26, 36 to 56, 80 to 99, 114 to 134, 144 to 164, 174 to 194, and 207 to 224; these read LFFV…FLPT, LVSV…ILLA, SVYD…HRIY, VLSV…HLII, IFEY…ATML, FYYH…IYKF, and YVEA…VLSS.

The protein belongs to the mimivirus L68/R809 family.

It is found in the membrane. This is an uncharacterized protein from Acanthamoeba polyphaga (Amoeba).